The sequence spans 383 residues: MAHARDPTGAEIARFIATRTGAQMVQLMRCIKEPAAQAAFTAKLLVVPPAVSGRPATPEKARKALNAFVGFRCYYVTIPMFKSWPMKKLSNLIGLLWEADPNKSLWSLMAKAWSTIRDQIGKDQAPLDQFFRIICPHLKLPDPASYLEIHGWILTVNEEGDPTISRSADSEFVSIGTGNTDVALSVEDIITYVQSLGYAHGFILDDNKPSSTFLGQSVSSTLEKNTSAISVTQATPNAAHARFLVRNKRRAKRQAVRNASYRASLDQDILIAHQFNPAPVDEHMPDCHSNTAPVLDQCHNPSPNQFYDGITTLLSDQIPTGQGDAGHLDNAHLFNDYSLPGDVSFITIDDFTTNMPNLIDYDAFRLGADEDVALPIFDDITHI.

A DNA-binding region (alpha box) is located at residues 60–117; the sequence is KARKALNAFVGFRCYYVTIPMFKSWPMKKLSNLIGLLWEADPNKSLWSLMAKAWSTIR.

This sequence belongs to the MATALPHA1 family.

Its subcellular location is the nucleus. In terms of biological role, mating type proteins are sequence specific DNA-binding proteins that act as master switches in fungal differentiation by controlling gene expression in a cell type-specific fashion. Transcriptional activator that induces the transcription of alpha-specific genes. The chain is Mating-type protein MAT-1 (MAT1) from Cochliobolus heterostrophus (Southern corn leaf blight fungus).